The sequence spans 403 residues: Mitochondrial intermembrane space import and assembly protein 40 (403 aa).

Residues 1–31 (MLRNLVVRNACRNRPSIQVARGLCRHQTRRL) constitute a mitochondrion transit peptide. Residues 33–46 (ASSPQFGRNSNQEK) are Mitochondrial matrix-facing. A helical; Signal-anchor for type II membrane protein transmembrane segment spans residues 47–66 (TAGFIMGILSMAGALYFIAP). Residues 67 to 403 (NRKPLFASRK…KEPLNEESKP (337 aa)) are Mitochondrial intermembrane-facing. Composition is skewed to basic and acidic residues over residues 75–84 (RKVESDKTAE), 101–118 (NNSK…KNDE), 147–168 (EDNK…KDDE), 206–230 (SEKK…KTTT), and 262–271 (EELRKQEEKQ). The tract at residues 75–292 (RKVESDKTAE…GAYNPDTGEI (218 aa)) is disordered. 3 cysteine pairs are disulfide-bonded: C296–C298, C307–C340, and C317–C330. Residues 304-348 (HGPCGEEFKSAFSCFVYSEAEPKGIDCVEKFQHMQDCFRKYPEHY) form the CHCH domain. 2 short sequence motifs (cx9C motif) span residues 307 to 317 (CGEEFKSAFSC) and 330 to 340 (CVEKFQHMQDC). The segment at 351–403 (QLKETSDDEEPQDKVKVNTIESAPNVSSAKENAAKKAEQSDVKKEPLNEESKP) is disordered. Over residues 369–378 (TIESAPNVSS) the composition is skewed to polar residues. The segment covering 382–403 (NAAKKAEQSDVKKEPLNEESKP) has biased composition (basic and acidic residues).

In terms of assembly, monomer. Interacts with the FAD-linked sulfhydryl oxidase ERV1 and with the substrate proteins COX17, TIM9, and TIM13, forming transient intermolecular disulfide bridges. Interacts with FCJ1. The cofactor is Cu(2+). Zn(2+) is required as a cofactor.

The protein resides in the mitochondrion inner membrane. Functionally, required for the import and folding of small cysteine-containing proteins (small Tim) in the mitochondrial intermembrane space (IMS). Forms a redox cycle with ERV1 that involves a disulfide relay system. Precursor proteins to be imported into the IMS are translocated in their reduced form into the mitochondria. The oxidized form of MIA40 forms a transient intermolecular disulfide bridge with the reduced precursor protein, resulting in oxidation of the precursor protein that now contains an intramolecular disulfide bond and is able to undergo folding in the IMS. Reduced MIA40 is reoxidized by FAD-linked sulfhydryl oxidase ERV1. The polypeptide is Mitochondrial intermembrane space import and assembly protein 40 (MIA40) (Saccharomyces cerevisiae (strain ATCC 204508 / S288c) (Baker's yeast)).